Reading from the N-terminus, the 488-residue chain is Malonate-semialdehyde dehydrogenase 1 (488 aa).

Residues Phe156, Lys180, Glu183, Arg184, Ser233, and Ser255 each coordinate NAD(+). Cys288 acts as the Nucleophile in catalysis. Glu387 serves as a coordination point for NAD(+).

Belongs to the aldehyde dehydrogenase family. IolA subfamily. As to quaternary structure, homotetramer.

It catalyses the reaction 3-oxopropanoate + NAD(+) + CoA + H2O = hydrogencarbonate + acetyl-CoA + NADH + H(+). It carries out the reaction 2-methyl-3-oxopropanoate + NAD(+) + CoA + H2O = propanoyl-CoA + hydrogencarbonate + NADH + H(+). It participates in polyol metabolism; myo-inositol degradation into acetyl-CoA; acetyl-CoA from myo-inositol: step 7/7. In terms of biological role, catalyzes the oxidation of malonate semialdehyde (MSA) and methylmalonate semialdehyde (MMSA) into acetyl-CoA and propanoyl-CoA, respectively. Is involved in a myo-inositol catabolic pathway. Bicarbonate, and not CO2, is the end-product of the enzymatic reaction. The protein is Malonate-semialdehyde dehydrogenase 1 of Geobacillus kaustophilus (strain HTA426).